We begin with the raw amino-acid sequence, 462 residues long: MQVTEINAEGLKREFKVVVPAQQLETRMQDKLAEIARTVAMPGFRPGKVPMTIVRKKYGGAVMGEILENAVNDGAGKAITDGGLRPAMQPKIEITKYEENSDLEFTVAVEVLPEIKTMDFGTINLVRDKAVVPDAEVDDALAKIAERNETSEPVKRASKSGDVVVIDFVGKVDGVAFPGGTAEGYSLKLGSNTFIPGFEDQLVGKKAESDVEVNVTFPEGYGNETLAGKPALFEVKVKEVRAPKAAAVDDELAKSVGLENLDALKTAIRDEISRELDGVSRMKLKRALLDALSDGHDFPVPPSMLEGEFEAIWKQVEADKEAGRQDPADAAKSEDELKADYRALAERRVRLGLLLADVGRVNEINVTQEDLNRGIMMEARRYPGQEHLVLQYYQKNQEALESLRAPLYEEKVVDFILELAKITDKEVSVEDLRKDPDEASADGEAAPAKPKKKAAAKKKAAE.

The PPIase FKBP-type domain occupies 161–246 (GDVVVIDFVG…VKEVRAPKAA (86 aa)). The span at 428–437 (SVEDLRKDPD) shows a compositional bias: basic and acidic residues. A disordered region spans residues 428 to 462 (SVEDLRKDPDEASADGEAAPAKPKKKAAAKKKAAE). Positions 449–462 (KPKKKAAAKKKAAE) are enriched in basic residues.

The protein belongs to the FKBP-type PPIase family. Tig subfamily.

Its subcellular location is the cytoplasm. The catalysed reaction is [protein]-peptidylproline (omega=180) = [protein]-peptidylproline (omega=0). Functionally, involved in protein export. Acts as a chaperone by maintaining the newly synthesized protein in an open conformation. Functions as a peptidyl-prolyl cis-trans isomerase. This Paramagnetospirillum magneticum (strain ATCC 700264 / AMB-1) (Magnetospirillum magneticum) protein is Trigger factor.